Consider the following 412-residue polypeptide: Serine hydroxymethyltransferase (412 aa).

(6S)-5,6,7,8-tetrahydrofolate contacts are provided by residues Leu-117 and 121 to 123; that span reads GHL. Lys-226 carries the post-translational modification N6-(pyridoxal phosphate)lysine.

Belongs to the SHMT family. As to quaternary structure, homodimer. The cofactor is pyridoxal 5'-phosphate.

It is found in the cytoplasm. The enzyme catalyses (6R)-5,10-methylene-5,6,7,8-tetrahydrofolate + glycine + H2O = (6S)-5,6,7,8-tetrahydrofolate + L-serine. Its pathway is one-carbon metabolism; tetrahydrofolate interconversion. It participates in amino-acid biosynthesis; glycine biosynthesis; glycine from L-serine: step 1/1. Functionally, catalyzes the reversible interconversion of serine and glycine with tetrahydrofolate (THF) serving as the one-carbon carrier. This reaction serves as the major source of one-carbon groups required for the biosynthesis of purines, thymidylate, methionine, and other important biomolecules. Also exhibits THF-independent aldolase activity toward beta-hydroxyamino acids, producing glycine and aldehydes, via a retro-aldol mechanism. The polypeptide is Serine hydroxymethyltransferase (Staphylococcus aureus (strain bovine RF122 / ET3-1)).